The following is a 73-amino-acid chain: Large ribosomal subunit protein uL30 (73 aa).

Belongs to the universal ribosomal protein uL30 family. In terms of assembly, part of the 50S ribosomal subunit.

The chain is Large ribosomal subunit protein uL30 from Borrelia hermsii (strain HS1 / DAH).